A 169-amino-acid polypeptide reads, in one-letter code: MAEMKKTIDNKPAPKGEKKANRRGAARLAAVQALYQMDVGGAGLNDIFAEFESHWLGNEVEGDQYLPAEQAFFQDVVSGVVRDQAKLDPLIDVALAKGWPLARIDAILRAVMRAGAYELEHRKDVPARVVVSEYVDVANAFVEGEETGMVNAVLDQIARQFRADEFSRG.

Positions 1–19 (MAEMKKTIDNKPAPKGEKK) are enriched in basic and acidic residues. Positions 1–22 (MAEMKKTIDNKPAPKGEKKANR) are disordered.

It belongs to the NusB family.

Its function is as follows. Involved in transcription antitermination. Required for transcription of ribosomal RNA (rRNA) genes. Binds specifically to the boxA antiterminator sequence of the ribosomal RNA (rrn) operons. This chain is Transcription antitermination protein NusB, found in Rhodopseudomonas palustris (strain BisB18).